Consider the following 559-residue polypeptide: Dihydroxy-acid dehydratase (559 aa).

Aspartate 80 is a binding site for Mg(2+). Position 121 (cysteine 121) interacts with [2Fe-2S] cluster. Residues aspartate 122 and lysine 123 each coordinate Mg(2+). Lysine 123 is subject to N6-carboxylysine. Cysteine 194 serves as a coordination point for [2Fe-2S] cluster. Residue glutamate 447 coordinates Mg(2+). Serine 473 functions as the Proton acceptor in the catalytic mechanism.

This sequence belongs to the IlvD/Edd family. As to quaternary structure, homodimer. It depends on [2Fe-2S] cluster as a cofactor. Mg(2+) serves as cofactor.

It carries out the reaction (2R)-2,3-dihydroxy-3-methylbutanoate = 3-methyl-2-oxobutanoate + H2O. The catalysed reaction is (2R,3R)-2,3-dihydroxy-3-methylpentanoate = (S)-3-methyl-2-oxopentanoate + H2O. The protein operates within amino-acid biosynthesis; L-isoleucine biosynthesis; L-isoleucine from 2-oxobutanoate: step 3/4. Its pathway is amino-acid biosynthesis; L-valine biosynthesis; L-valine from pyruvate: step 3/4. Its function is as follows. Functions in the biosynthesis of branched-chain amino acids. Catalyzes the dehydration of (2R,3R)-2,3-dihydroxy-3-methylpentanoate (2,3-dihydroxy-3-methylvalerate) into 2-oxo-3-methylpentanoate (2-oxo-3-methylvalerate) and of (2R)-2,3-dihydroxy-3-methylbutanoate (2,3-dihydroxyisovalerate) into 2-oxo-3-methylbutanoate (2-oxoisovalerate), the penultimate precursor to L-isoleucine and L-valine, respectively. This is Dihydroxy-acid dehydratase from Chlorobium chlorochromatii (strain CaD3).